The following is a 1938-amino-acid chain: Myosin-4 (1938 aa).

The Myosin N-terminal SH3-like domain maps to 33–82 (DAKSSVFVADPKESFVKATVQSREGGKVTAKTEAGATVTVKEDQVFPMNP). Serine 36 is subject to Phosphoserine. 2 positions are modified to phosphothreonine: threonine 64 and threonine 69. In terms of domain architecture, Myosin motor spans 86 to 781 (DKIEDMAMMT…LLGLLEEMRD (696 aa)). 179-186 (GESGAGKT) contacts ATP. Position 389 is a phosphotyrosine (tyrosine 389). Serine 392 bears the Phosphoserine mark. The residue at position 419 (threonine 419) is a Phosphothreonine. Tyrosine 424 is subject to Phosphotyrosine. The interval 658–680 (LNKLMTNLRSTHPHFVRCIIPNE) is actin-binding. Position 756 is a pros-methylhistidine (histidine 756). An actin-binding region spans residues 760 to 774 (KFGHTKVFFKAGLLG). The IQ domain maps to 784 to 813 (LAQLITRTQAMCRGFLARVEYKKMVERRES). A coiled-coil region spans residues 845 to 1926 (SAETEKEMAN…ESQVNKLRVK (1082 aa)). Residues serine 1091, serine 1095, serine 1161, and serine 1236 each carry the phosphoserine modification. Threonine 1240 is modified (phosphothreonine). Residue serine 1242 is modified to Phosphoserine. Residue threonine 1254 is modified to Phosphothreonine. Serine 1260 is modified (phosphoserine). Residue threonine 1264 is modified to Phosphothreonine. Serine 1277 is modified (phosphoserine). Threonine 1285 is subject to Phosphothreonine. 4 positions are modified to phosphoserine: serine 1287, serine 1291, serine 1302, and serine 1305. Position 1463 is a phosphotyrosine (tyrosine 1463). A Phosphothreonine modification is found at threonine 1466. Serine 1473 carries the phosphoserine modification. Tyrosine 1491 is modified (phosphotyrosine). Serine 1494 is subject to Phosphoserine. The residue at position 1500 (threonine 1500) is a Phosphothreonine. Serine 1513 bears the Phosphoserine mark. Phosphothreonine is present on threonine 1516. Phosphoserine is present on residues serine 1541, serine 1553, serine 1573, serine 1599, serine 1602, serine 1713, and serine 1725. Residues threonine 1729 and threonine 1735 each carry the phosphothreonine modification. Phosphoserine is present on serine 1738.

It belongs to the TRAFAC class myosin-kinesin ATPase superfamily. Myosin family. As to quaternary structure, muscle myosin is a hexameric protein that consists of 2 heavy chain subunits (MHC), 2 alkali light chain subunits (MLC) and 2 regulatory light chain subunits (MLC-2).

It localises to the cytoplasm. The protein resides in the myofibril. In terms of biological role, muscle contraction. The protein is Myosin-4 (MYH4) of Oryctolagus cuniculus (Rabbit).